The primary structure comprises 456 residues: uncharacterized protein (456 aa).

The 59-residue stretch at 3-61 (LMRKNETREFLIEDIEFPAVGVAFYNDKKVYIKGAVPGQKVLARVSKVRREKIEAKLKE) folds into the TRAM domain. [4Fe-4S] cluster is bound by residues Cys74, Cys80, Cys83, and Cys163. 4 residues coordinate S-adenosyl-L-methionine: Gln289, Tyr318, Glu339, and Asp384. Residue Cys411 is the Nucleophile of the active site.

This sequence belongs to the class I-like SAM-binding methyltransferase superfamily. RNA M5U methyltransferase family.

This is an uncharacterized protein from Clostridium acetobutylicum (strain ATCC 824 / DSM 792 / JCM 1419 / IAM 19013 / LMG 5710 / NBRC 13948 / NRRL B-527 / VKM B-1787 / 2291 / W).